A 156-amino-acid chain; its full sequence is Snaclec stejaggregin-B subunit alpha (156 aa).

The signal sequence occupies residues 1 to 23; the sequence is MGRFISVSFGLLVVFLSLSGTGA. Disulfide bonds link Cys25–Cys36, Cys53–Cys150, and Cys125–Cys142. Residues 32-151 enclose the C-type lectin domain; the sequence is FKQYCYQIIK…CEQKHLFMCK (120 aa).

This sequence belongs to the snaclec family. In terms of assembly, heteromultimer; disulfide-linked. As to expression, expressed by the venom gland.

It localises to the secreted. Its function is as follows. Interferes with one step of hemostasis (modulation of platelet aggregation, or coagulation cascade, for example). The polypeptide is Snaclec stejaggregin-B subunit alpha (Trimeresurus stejnegeri (Chinese green tree viper)).